An 860-amino-acid chain; its full sequence is Leucine--tRNA ligase (860 aa).

A 'HIGH' region motif is present at residues 42–52 (PYPSGRLHMGH). Residues 619-623 (KMSKS) carry the 'KMSKS' region motif. ATP is bound at residue lysine 622.

This sequence belongs to the class-I aminoacyl-tRNA synthetase family.

It is found in the cytoplasm. It carries out the reaction tRNA(Leu) + L-leucine + ATP = L-leucyl-tRNA(Leu) + AMP + diphosphate. This Escherichia coli O9:H4 (strain HS) protein is Leucine--tRNA ligase.